A 302-amino-acid chain; its full sequence is N-acetylmuramic acid 6-phosphate etherase (302 aa).

In terms of domain architecture, SIS spans Ile-57–Lys-220. The active-site Proton donor is the Glu-85. The active site involves Glu-116.

It belongs to the GCKR-like family. MurNAc-6-P etherase subfamily. Homodimer.

The enzyme catalyses N-acetyl-D-muramate 6-phosphate + H2O = N-acetyl-D-glucosamine 6-phosphate + (R)-lactate. It functions in the pathway amino-sugar metabolism; N-acetylmuramate degradation. Specifically catalyzes the cleavage of the D-lactyl ether substituent of MurNAc 6-phosphate, producing GlcNAc 6-phosphate and D-lactate. This is N-acetylmuramic acid 6-phosphate etherase from Rhodopirellula baltica (strain DSM 10527 / NCIMB 13988 / SH1).